Consider the following 304-residue polypeptide: Galactose 1-dehydrogenase (304 aa).

The protein belongs to the Gfo/Idh/MocA family. In terms of assembly, homodimer.

The protein resides in the cytoplasm. The catalysed reaction is D-galactose + NAD(+) = D-galactono-1,4-lactone + NADH + H(+). It functions in the pathway carbohydrate metabolism; galactose metabolism. Its function is as follows. Catalyzes the dehydrogenation of D-galactose by either NAD(+) or NADP(+). Oxidizes following sugars in decreasing order: D-fucose &gt; D-galactose &gt; L-arabinose &gt; 2-deoxy-D-galactose &gt;&gt; 4-deoxy-D-galactose &gt; 2-deoxy-2-amino-D-galactose. This is Galactose 1-dehydrogenase (gal) from Pseudomonas fluorescens.